Here is a 931-residue protein sequence, read N- to C-terminus: MTTGFLQKIFGSRNQRLVKQYQKTVAAINALETQIETLTDDQLRGKTGEFRQRIAAGESLDKLLPEAFAVCREASRRVLKMRHFDVQMIGGMVLHYGKIAEMRTGEGKTLVATLAAYLNALAGRGVHVVTVNDYLAQRDAEWMGRLYNFLGLSVGINLSGMEHDQKQAAYAADITYGTNNEFGFDYLRDNMVYETDSRVQRPLNFAVVDEVDSILIDEARTPLIISGQAEDHTELYVRMNALPPLLERQIGEEKADGTGVEKPGDYTLDEKGRQVFLTESGHEKAERMLAEWGLIGDGESLYAPQNITLMHHVYAALRAHTLFHRDQHYVVQNDEVIIVDEFTGRLMPGRRWSDGLHQAVEAKEHVKIQSENQTLASITFQNYFRMYAKLSGMTGTADTEAYEFNEIYGLETVVIPTNRPPKRIDKQDQIYKTAKERYDAVIRDIRECHERGQPVLVGTTSIENSELLSHLLKQAGLPHEVLNAKQHAREAAIVAEAGRPKRITIATNMAGRGTDIVLGGNVEKQAAFIEADESIPADEKARRIQQLHDEWETLHEQVKTAGGLHIIGTERHESRRIDNQLRGRAGRQGDPGSSRFYLSLEDPLLRIFAGDRVRAIMDRLKMPEGEAIEAGIVTRSIESAQRKVEARNFDIRKQLLEYDDVSNDQRKVIYQQRNELLEAHDIAETIGAMRHGVISEVVRQFVPAGSIEEQWDLPELEETLRNDWQLDLAIQEMVNESSSINADEILDAVTTAADEHYEAKVALVGRESFSAFERSIMLQTLDRLWREHLAALDHLRQGIHLRGYAQKNPKQEYKREAFELFAAMLDAVKQEVTRIVMNVQIQSPEQLEEAAEQIEEQGGQLGNVEFQHADFAAAAAAATAGGAVVADATAEMVGHAMSHSGPAGEVPRVGRNDPCPCGSGKKYKHCHGKLN.

Residues glutamine 87, 105–109 (GEGKT), and aspartate 515 contribute to the ATP site. 4 residues coordinate Zn(2+): cysteine 915, cysteine 917, cysteine 926, and histidine 927.

It belongs to the SecA family. Monomer and homodimer. Part of the essential Sec protein translocation apparatus which comprises SecA, SecYEG and auxiliary proteins SecDF-YajC and YidC. Requires Zn(2+) as cofactor.

The protein localises to the cell inner membrane. It is found in the cytoplasm. It carries out the reaction ATP + H2O + cellular proteinSide 1 = ADP + phosphate + cellular proteinSide 2.. In terms of biological role, part of the Sec protein translocase complex. Interacts with the SecYEG preprotein conducting channel. Has a central role in coupling the hydrolysis of ATP to the transfer of proteins into and across the cell membrane, serving both as a receptor for the preprotein-SecB complex and as an ATP-driven molecular motor driving the stepwise translocation of polypeptide chains across the membrane. The chain is Protein translocase subunit SecA from Burkholderia pseudomallei (strain K96243).